The sequence spans 398 residues: uncharacterized protein (398 aa).

This sequence belongs to the glycosyltransferase 2 family.

This is an uncharacterized protein from Escherichia coli (strain K12).